Reading from the N-terminus, the 204-residue chain is Cytochrome c biogenesis ATP-binding export protein CcmA (204 aa).

One can recognise an ABC transporter domain in the interval 2-204; the sequence is IEVRDLGVSR…LDAEDLGGFL (203 aa). An ATP-binding site is contributed by 34–41; sequence GPNGIGKT.

It belongs to the ABC transporter superfamily. CcmA exporter (TC 3.A.1.107) family. As to quaternary structure, the complex is composed of two ATP-binding proteins (CcmA) and two transmembrane proteins (CcmB).

Its subcellular location is the cell inner membrane. It catalyses the reaction heme b(in) + ATP + H2O = heme b(out) + ADP + phosphate + H(+). Part of the ABC transporter complex CcmAB involved in the biogenesis of c-type cytochromes; once thought to export heme, this seems not to be the case, but its exact role is uncertain. Responsible for energy coupling to the transport system. This Ruegeria sp. (strain TM1040) (Silicibacter sp.) protein is Cytochrome c biogenesis ATP-binding export protein CcmA.